Here is a 760-residue protein sequence, read N- to C-terminus: Histone-lysine N-methyltransferase EZH2 (760 aa).

Disordered stretches follow at residues 208 to 231 (KDDA…SKKF) and 356 to 444 (PERA…PENV). Positions 361-373 (TPSKRSTGRRRGR) are enriched in basic residues. The segment covering 375-388 (PNSNSRPSTPTVNS) has biased composition (polar residues). Residues 389–400 (ETKDTDSDREGG) show a composition bias toward basic and acidic residues. The CXC domain occupies 517 to 619 (CRKIQLKKDG…SKNVSCKNCS (103 aa)). An SET domain is found at 626–741 (KHLLLAPSDV…TGEELFFDYR (116 aa)).

Belongs to the class V-like SAM-binding methyltransferase superfamily. Histone-lysine methyltransferase family. EZ subfamily. In terms of assembly, component of the prc2/eed-ezh2 complex.

The protein resides in the nucleus. The catalysed reaction is L-lysyl(27)-[histone H3] + 3 S-adenosyl-L-methionine = N(6),N(6),N(6)-trimethyl-L-lysyl(27)-[histone H3] + 3 S-adenosyl-L-homocysteine + 3 H(+). Functionally, polycomb group (PcG) protein. Catalytic subunit of the prc2/eed-ezh2 complex, which methylates 'Lys-9' and 'Lys-27' of histone H3, leading to transcriptional repression of the affected target gene. May regulate the circadian clock via histone methylation at the promoter of the circadian genes. In Danio rerio (Zebrafish), this protein is Histone-lysine N-methyltransferase EZH2 (ezh2).